A 297-amino-acid chain; its full sequence is Formylmethanofuran--tetrahydromethanopterin formyltransferase (297 aa).

The protein belongs to the FTR family. As to quaternary structure, homotetramer.

Its subcellular location is the cytoplasm. The catalysed reaction is N-formylmethanofuran + 5,6,7,8-tetrahydromethanopterin + H(+) = N(5)-formyl-5,6,7,8-tetrahydromethanopterin + methanofuran. Its pathway is one-carbon metabolism; methanogenesis from CO(2); 5,10-methenyl-5,6,7,8-tetrahydromethanopterin from CO(2): step 2/3. Its function is as follows. Catalyzes the reversible transfer of a formyl group from formylmethanofuran (formyl-MFR) to tetrahydromethanopterin (H(4)MPT) to produce 5-formyl tetrahydromethanopterin (5-formyl-H(4)MPT) and methanofuran (MFR). The protein is Formylmethanofuran--tetrahydromethanopterin formyltransferase of Methanosarcina acetivorans (strain ATCC 35395 / DSM 2834 / JCM 12185 / C2A).